Consider the following 1089-residue polypeptide: Probable transport protein MmpL8 (1089 aa).

Residues 1–26 (MCDVLMQPVRTPRPSTNLRSKPLRPT) are disordered. 12 consecutive transmembrane segments (helical) span residues 44–64 (WVVIAFWVALAGLLAPTVPSL), 222–242 (ITILLLVILLIIYGNPITMVL), 257–277 (LVAIAGLAGLGIANQSIIFMS), 316–336 (IGKVIAASAATVAITFLGMVF), 349–369 (LGISVAVVFFAAVTLLPALMV), 400–420 (KTHLLASALVLVILAGCAGLA), 555–575 (AISTVGGLIDALAYLQDLLGG), 874–894 (IIAMTVCIVLLILIVLLRAIV), 898–918 (YLIGSVIVSYLAALGIGVIVF), 930–950 (IPGLTFVILVAVGADYNMLLI), 973–993 (GGVITAAGLIMAASMYGLVFA), and 996–1016 (GSVVQGAFVLGTGLLLDTFLV). The tract at residues 1056 to 1078 (RTKRKPLLPKEEEEQSPPDDDDL) is disordered. Acidic residues predominate over residues 1066 to 1078 (EEEEQSPPDDDDL).

Belongs to the resistance-nodulation-cell division (RND) (TC 2.A.6) family. MmpL subfamily.

The protein localises to the cell membrane. This Mycobacterium tuberculosis (strain ATCC 25177 / H37Ra) protein is Probable transport protein MmpL8 (mmpL8).